A 255-amino-acid polypeptide reads, in one-letter code: 5'-nucleotidase SurE (255 aa).

A divalent metal cation-binding residues include D8, D9, S40, and N93.

Belongs to the SurE nucleotidase family. A divalent metal cation serves as cofactor.

Its subcellular location is the cytoplasm. It carries out the reaction a ribonucleoside 5'-phosphate + H2O = a ribonucleoside + phosphate. Nucleotidase that shows phosphatase activity on nucleoside 5'-monophosphates. The sequence is that of 5'-nucleotidase SurE from Bradyrhizobium sp. (strain ORS 278).